The sequence spans 505 residues: Glutamate--cysteine ligase (505 aa).

Belongs to the glutamate--cysteine ligase type 1 family. Type 1 subfamily.

The catalysed reaction is L-cysteine + L-glutamate + ATP = gamma-L-glutamyl-L-cysteine + ADP + phosphate + H(+). The protein operates within sulfur metabolism; glutathione biosynthesis; glutathione from L-cysteine and L-glutamate: step 1/2. This chain is Glutamate--cysteine ligase, found in Wigglesworthia glossinidia brevipalpis.